The sequence spans 130 residues: Small ribosomal subunit protein uS9 (130 aa).

A disordered region spans residues 109-130 (RMKERRKYGLKKARKAPQFSKR). Positions 111–130 (KERRKYGLKKARKAPQFSKR) are enriched in basic residues.

This sequence belongs to the universal ribosomal protein uS9 family.

In Caldanaerobacter subterraneus subsp. tengcongensis (strain DSM 15242 / JCM 11007 / NBRC 100824 / MB4) (Thermoanaerobacter tengcongensis), this protein is Small ribosomal subunit protein uS9.